Here is a 179-residue protein sequence, read N- to C-terminus: Hypoxanthine phosphoribosyltransferase (179 aa).

The diphosphate site is built by arginine 45 and glycine 46. Residue glutamate 101 participates in GMP binding. Residue glutamate 101 coordinates IMP. Residues glutamate 101 and aspartate 102 each contribute to the Mg(2+) site. Aspartate 105 (proton acceptor) is an active-site residue. Residues 105–110 (DTGYTL), lysine 133, and aspartate 161 each bind GMP. IMP contacts are provided by residues 105–110 (DTGYTL) and lysine 133. Position 167 (arginine 167) interacts with diphosphate.

The protein belongs to the purine/pyrimidine phosphoribosyltransferase family. Homotetramer. Requires Mg(2+) as cofactor.

Its subcellular location is the cytoplasm. The enzyme catalyses IMP + diphosphate = hypoxanthine + 5-phospho-alpha-D-ribose 1-diphosphate. The catalysed reaction is GMP + diphosphate = guanine + 5-phospho-alpha-D-ribose 1-diphosphate. It participates in purine metabolism; IMP biosynthesis via salvage pathway; IMP from hypoxanthine: step 1/1. Purine salvage pathway enzyme which catalyzes the transfer of the ribosyl-5-phosphate group from 5-phospho-alpha-D-ribose 1-diphosphate (PRPP) to the N9 position of hypoxanthine to yield IMP (inosine 5'-monophosphate). To a lesser extent, can also act on guanine leading to GMP, but shows a highly less efficient activity with xanthine. In Haemophilus influenzae (strain ATCC 51907 / DSM 11121 / KW20 / Rd), this protein is Hypoxanthine phosphoribosyltransferase (hpt).